A 154-amino-acid chain; its full sequence is Fimbrial protein (154 aa).

A propeptide spans 1 to 6 (leader sequence); sequence MKAQKG. Phe-7 is subject to N-methylphenylalanine. A helical transmembrane segment spans residues 7–27; sequence FTLIELMIVVAIIGILAAIAI. A disulfide bridge links Cys-133 with Cys-151.

It belongs to the N-Me-Phe pilin family. In terms of assembly, the pili are polar flexible filaments of about 5.4 nanometers diameter and 2.5 micrometers average length; they consist of only a single polypeptide chain arranged in a helical configuration of five subunits per turn in the assembled pilus.

It is found in the fimbrium. The protein resides in the membrane. The protein is Fimbrial protein (pilA) of Pseudomonas aeruginosa.